A 365-amino-acid chain; its full sequence is HLA class I histocompatibility antigen, A alpha chain (365 aa).

A signal peptide spans 1-24 (MAVMAPRTLLLLLSGALALTQTWA). The segment at 3–11 (VMAPRTLLL) is VL9 epitope. Residues 25–114 (GSHSMRYFFT…LRGYYNQSEA (90 aa)) are alpha-1. Residues 25–308 (GSHSMRYFFT…ELSSQPTIPI (284 aa)) are Extracellular-facing. Tyrosine 31 is a binding site for a peptide antigen. The residue at position 83 (tyrosine 83) is a Sulfotyrosine. A peptide antigen is bound by residues threonine 97 and tyrosine 108. An N-linked (GlcNAc...) asparagine glycan is attached at asparagine 110. The segment at 115 to 206 (GSHTIQIMYG…ENGKETLQRT (92 aa)) is alpha-2. An intrachain disulfide couples cysteine 125 to cysteine 188. 5 residues coordinate a peptide antigen: aspartate 140, threonine 167, lysine 170, tyrosine 183, and tyrosine 195. Positions 207 to 298 (DPPKTHMTHH…GLPKPLTLRW (92 aa)) are alpha-3. Positions 209 to 295 (PKTHMTHHPI…QHEGLPKPLT (87 aa)) constitute an Ig-like C1-type domain. Residues cysteine 227 and cysteine 283 are joined by a disulfide bond. The tract at residues 299–308 (ELSSQPTIPI) is connecting peptide. Residues 309-332 (VGIIAGLVLLGAVITGAVVAAVMW) form a helical membrane-spanning segment. Over 333-365 (RRKSSDRKGGSYTQAASSDSAQGSDVSLTACKV) the chain is Cytoplasmic. Positions 339 to 365 (RKGGSYTQAASSDSAQGSDVSLTACKV) are disordered. Serine 343 carries the post-translational modification Phosphoserine. Residue tyrosine 344 is modified to Phosphotyrosine. Over residues 346–359 (QAASSDSAQGSDVS) the composition is skewed to low complexity. Phosphoserine occurs at positions 349, 350, 352, 356, and 359.

The protein belongs to the MHC class I family. Heterotrimer that consists of an alpha chain HLA-A, a beta chain B2M and a peptide (peptide-HLA-A-B2M). Early in biogenesis, HLA-A-B2M dimer interacts with the components of the peptide-loading complex composed of TAPBP, TAP1-TAP2, TAPBPL, PDIA3/ERP57 and CALR. Interacts with TAP1-TAP2 transporter via TAPBP; this interaction is obligatory for the loading of peptide epitopes delivered to the ER by TAP1-TAP2 transporter. Interacts with TAPBPL; TAPBPL binds peptide-free HLA-A-B2M complexes or those loaded with low affinity peptides, likely facilitating peptide exchange for higher affinity peptides. Only optimally assembled peptide-HLA-B2M trimer translocates to the surface of antigen-presenting cells, where it interacts with TCR and CD8 coreceptor on the surface of T cells. HLA-A (via polymorphic alpha-1 and alpha-2 domains) interacts with antigen-specific TCR (via CDR3 domains). One HLA-A molecule (mainly via nonpolymorphic alpha-3 domain) interacts with one CD8A homodimer (via CDR-like loop); this interaction ensures peptide-HLA-A-B2M recognition by CD8-positive T cells only. Alleles A*23:01; A*24:02 and A*32:01 interact (via Bw4 motif) with KIR3DL1 on NK cells; this interaction is direct. As to quaternary structure, (Microbial infection) Interacts with HHV-8 MIR1 protein. In terms of assembly, (Microbial infection) Interacts with HTLV-1 accessory protein p12I. In terms of processing, (Microbial infection) Polyubiquitinated in a post ER compartment by interaction with human herpesvirus 8 MIR1 protein. This targets the protein for rapid degradation via the ubiquitin system. N-linked glycosylation at Asn-110. In terms of tissue distribution, ubiquitous.

It localises to the cell membrane. The protein resides in the endoplasmic reticulum membrane. Antigen-presenting major histocompatibility complex class I (MHCI) molecule. In complex with B2M/beta 2 microglobulin displays primarily viral and tumor-derived peptides on antigen-presenting cells for recognition by alpha-beta T cell receptor (TCR) on HLA-A-restricted CD8-positive T cells, guiding antigen-specific T cell immune response to eliminate infected or transformed cells. May also present self-peptides derived from the signal sequence of secreted or membrane proteins, although T cells specific for these peptides are usually inactivated to prevent autoreactivity. Both the peptide and the MHC molecule are recognized by TCR, the peptide is responsible for the fine specificity of antigen recognition and MHC residues account for the MHC restriction of T cells. Typically presents intracellular peptide antigens of 8 to 13 amino acids that arise from cytosolic proteolysis via IFNG-induced immunoproteasome or via endopeptidase IDE/insulin-degrading enzyme. Can bind different peptides containing allele-specific binding motifs, which are mainly defined by anchor residues at position 2 and 9. Its function is as follows. Allele A*01:01: Presents a restricted peptide repertoire including viral epitopes derived from IAV NP/nucleoprotein (CTELKLSDY), IAV PB1/polymerase basic protein 1 (VSDGGPNLY), HAdV-11 capsid L3/hexon protein (LTDLGQNLLY), SARS-CoV-2 3a/ORF3a (FTSDYYQLY) as well as tumor peptide antigens including MAGE1 (EADPTGHSY), MAGEA3 (EVDPIGHLY) and WT1 (TSEKRPFMCAY), all having in common a canonical motif with a negatively charged Asp or Glu residue at position 3 and a Tyr anchor residue at the C-terminus. A number of HLA-A*01:01-restricted peptides carry a post-translational modification with oxidation and N-terminal acetylation being the most frequent. Fails to present highly immunogenic peptides from the EBV latent antigens. In terms of biological role, allele A*02:01: A major allele in human populations, presents immunodominant viral epitopes derived from IAV M/matrix protein 1 (GILGFVFTL), HIV-1 env (TLTSCNTSV), HIV-1 gag-pol (ILKEPVHGV), HTLV-1 Tax (LLFGYPVYV), HBV C/core antigen (FLPSDFFPS), HCMV UL83/pp65 (NLVPMVATV) as well as tumor peptide antigens including MAGEA4 (GVYDGREHTV), WT1 (RMFPNAPYL) and CTAG1A/NY-ESO-1 (SLLMWITQC), all having in common hydrophobic amino acids at position 2 and at the C-terminal anchors. Functionally, allele A*03:01: Presents viral epitopes derived from IAV NP (ILRGSVAHK), HIV-1 nef (QVPLRPMTYK), HIV-1 gag-pol (AIFQSSMTK), SARS-CoV-2 N/nucleoprotein (KTFPPTEPK) as well as tumor peptide antigens including PMEL (LIYRRRLMK), NODAL (HAYIQSLLK), TRP-2 (RMYNMVPFF), all having in common hydrophobic amino acids at position 2 and Lys or Arg anchor residues at the C-terminus. May also display spliced peptides resulting from the ligation of two separate proteasomal cleavage products that are not contiguous in the parental protein. Allele A*11:01: Presents several immunodominant epitopes derived from HIV-1 gag-pol and HHV-4 EBNA4, containing the peptide motif with Val, Ile, Thr, Leu, Tyr or Phe at position 2 and Lys anchor residue at the C-terminus. Important in the control of HIV-1, EBV and HBV infections. Presents an immunodominant epitope derived from SARS-CoV-2 N/nucleoprotein (KTFPPTEPK). Its function is as follows. Allele A*23:01: Interacts with natural killer (NK) cell receptor KIR3DL1 and may contribute to functional maturation of NK cells and self-nonself discrimination during innate immune response. In terms of biological role, allele A*24:02: Presents viral epitopes derived from HIV-1 nef (RYPLTFGWCF), EBV lytic- and latent-cycle antigens BRLF1 (TYPVLEEMF), BMLF1 (DYNFVKQLF) and LMP2 (IYVLVMLVL), SARS-CoV nucleocapsid/N (QFKDNVILL), as well as tumor peptide antigens including PRAME (LYVDSLFFL), all sharing a common signature motif, namely an aromatic residue Tyr or Phe at position 2 and a nonhydrophobic anchor residue Phe, Leu or Iso at the C-terminus. Interacts with natural killer (NK) cell receptor KIR3DL1 and may contribute to functional maturation of NK cells and self-nonself discrimination during innate immune response. Functionally, allele A*26:01: Presents several epitopes derived from HIV-1 gag-pol (EVIPMFSAL, ETKLGKAGY) and env (LVSDGGPNLY), carrying as anchor residues preferentially Glu at position 1, Val or Thr at position 2 and Tyr at the C-terminus. Allele A*29:02: Presents peptides having a common motif, namely a Glu residue at position 2 and Tyr or Leu anchor residues at the C-terminus. Its function is as follows. Allele A*32:01: Interacts with natural killer (NK) cell receptor KIR3DL1 and may contribute to functional maturation of NK cells and self-nonself discrimination during innate immune response. In terms of biological role, allele A*68:01: Presents viral epitopes derived from IAV NP (KTGGPIYKR) and HIV-1 tat (ITKGLGISYGR), having a common signature motif namely, Val or Thr at position 2 and positively charged residues Arg or Lys at the C-terminal anchor. Functionally, allele A*74:01: Presents immunodominant HIV-1 epitopes derived from gag-pol (GQMVHQAISPR, QIYPGIKVR) and rev (RQIHSISER), carrying an aliphatic residue at position 2 and Arg anchor residue at the C-terminus. May contribute to viral load control in chronic HIV-1 infection. In Homo sapiens (Human), this protein is HLA class I histocompatibility antigen, A alpha chain.